A 547-amino-acid polypeptide reads, in one-letter code: Solute carrier family 22 member 25 (547 aa).

The Cytoplasmic portion of the chain corresponds to 1–9 (MAFQDLLDQ). A helical membrane pass occupies residues 10-30 (VGGLGRFQILQMVFLIMFNVI). Residues 31-145 (VYHQTQLENF…DLVCESQPLN (115 aa)) are Extracellular-facing. Residues N56 and N102 are each glycosylated (N-linked (GlcNAc...) asparagine). Residues 146-166 (SVAKFLFMAGMMVGGNLYGHL) form a helical membrane-spanning segment. The Cytoplasmic segment spans residues 167 to 177 (SDRFGRKFVLR). A helical transmembrane segment spans residues 178–198 (WSYLQLAIVGTCAAFAPTILV). Residues 199 to 204 (YCSLRF) are Extracellular-facing. A helical transmembrane segment spans residues 205-225 (LAGAATFSIIVNTVLLIVEWI). The Cytoplasmic segment spans residues 226 to 234 (THQFCAMAL). A helical transmembrane segment spans residues 235-255 (TLTLCAASIGHITLGSLAFVI). Topologically, residues 256-259 (RDQC) are extracellular. A helical transmembrane segment spans residues 260-280 (ILQLVMSAPCFVFFLFSRWLA). Residues 281–349 (ESARWLIINN…LLRIPNICKR (69 aa)) are Cytoplasmic-facing. The chain crosses the membrane as a helical span at residues 350 to 370 (ICFLSFVRFASTIPFWGLTLH). Topologically, residues 371–377 (LQHLGNN) are extracellular. A helical membrane pass occupies residues 378 to 398 (VFLLQTLFGAVTLLANCVAPW). Topologically, residues 399–406 (ALNHMSRR) are cytoplasmic. The helical transmembrane segment at 407–427 (LSQMLLMFLLATCLLAIIFVP) threads the bilayer. Over 428 to 434 (QEMQTLR) the chain is Extracellular. Residues 435–455 (VVLATLGVGAASLGITCSTAQ) form a helical membrane-spanning segment. At 456-470 (ENELIPSIIRGRATG) the chain is on the cytoplasmic side. The chain crosses the membrane as a helical span at residues 471 to 491 (ITGNFANIGGALASLMMILSI). Over 492–494 (YSR) the chain is Extracellular. A helical membrane pass occupies residues 495–515 (PLPWIIYGVFAILSGLVVLLL). Topologically, residues 516 to 547 (PETRNQPLLDSIQDVENEGVNSLAAPQRSSVL) are cytoplasmic.

This sequence belongs to the major facilitator (TC 2.A.1) superfamily. Organic cation transporter (TC 2.A.1.19) family. In terms of tissue distribution, expressed exclusively in liver in both embryo and adult.

The protein resides in the membrane. This is Solute carrier family 22 member 25 from Homo sapiens (Human).